The chain runs to 488 residues: Ribulose bisphosphate carboxylase large chain (488 aa).

Residues asparagine 127 and threonine 177 each contribute to the substrate site. The active-site Proton acceptor is the lysine 179. Substrate is bound at residue lysine 181. Mg(2+) is bound by residues lysine 205, aspartate 207, and glutamate 208. Lysine 205 carries the N6-carboxylysine modification. Histidine 297 acts as the Proton acceptor in catalysis. The substrate site is built by arginine 298, histidine 330, and serine 382.

The protein belongs to the RuBisCO large chain family. Type I subfamily. Heterohexadecamer of 8 large chains and 8 small chains. It depends on Mg(2+) as a cofactor.

The protein localises to the plastid. Its subcellular location is the chloroplast. The enzyme catalyses 2 (2R)-3-phosphoglycerate + 2 H(+) = D-ribulose 1,5-bisphosphate + CO2 + H2O. It catalyses the reaction D-ribulose 1,5-bisphosphate + O2 = 2-phosphoglycolate + (2R)-3-phosphoglycerate + 2 H(+). RuBisCO catalyzes two reactions: the carboxylation of D-ribulose 1,5-bisphosphate, the primary event in carbon dioxide fixation, as well as the oxidative fragmentation of the pentose substrate in the photorespiration process. Both reactions occur simultaneously and in competition at the same active site. The protein is Ribulose bisphosphate carboxylase large chain of Ectocarpus siliculosus (Brown alga).